Here is a 136-residue protein sequence, read N- to C-terminus: Histone H3 (136 aa).

The tract at residues 1–43 (MARTKQTARKSTGGKAPRKQLASKAARKAAPSTGGVKKPHRYK) is disordered. Lys-5 is subject to N6,N6,N6-trimethyllysine; alternate. An N6,N6-dimethyllysine; alternate modification is found at Lys-5. An N6-methyllysine; alternate mark is found at Lys-5 and Lys-10. The residue at position 10 (Lys-10) is an N6-acetyllysine; alternate. At Ser-11 the chain carries Phosphoserine. Lys-15 carries the post-translational modification N6,N6-dimethyllysine; alternate. Residues Lys-15, Lys-19, Lys-24, Lys-28, and Lys-37 each carry the N6-acetyllysine; alternate modification. N6-methyllysine; alternate occurs at positions 19, 24, 28, and 37. N6,N6,N6-trimethyllysine; alternate is present on residues Lys-28 and Lys-37. N6,N6-dimethyllysine; alternate is present on residues Lys-28 and Lys-37. N6-acetyllysine is present on residues Lys-57 and Lys-65. The residue at position 80 (Lys-80) is an N6,N6,N6-trimethyllysine; alternate. The residue at position 80 (Lys-80) is an N6,N6-dimethyllysine; alternate. Residue Lys-80 is modified to N6-methyllysine; alternate.

It belongs to the histone H3 family. The nucleosome is a histone octamer containing two molecules each of H2A, H2B, H3 and H4 assembled in one H3-H4 heterotetramer and two H2A-H2B heterodimers. The octamer wraps approximately 147 bp of DNA. Post-translationally, phosphorylated to form H3S10ph. H3S10ph promotes subsequent H3K14ac formation and is required for transcriptional activation through TBP recruitment to the promoters. Mono-, di- and trimethylated by the COMPASS complex to form H3K4me1/2/3. H3K4me activates gene expression by regulating transcription elongation and plays a role in telomere length maintenance. H3K4me enrichment correlates with transcription levels, and occurs in a 5' to 3' gradient with H3K4me3 enrichment at the 5'-end of genes, shifting to H3K4me2 and then H3K4me1. Methylated by set2 to form H3K36me. H3K36me represses gene expression. Methylated by dot1 to form H3K79me. H3K79me is required for association of SIR proteins with telomeric regions and for telomeric silencing. The COMPASS-mediated formation of H3K4me2/3 and the dot1-mediated formation of H3K79me require H2BK123ub1. In terms of processing, acetylation of histone H3 leads to transcriptional activation. H3K14ac formation by gcn5 is promoted by H3S10ph. H3K14ac can also be formed by esa1. H3K56ac formation occurs predominantly in newly synthesized H3 molecules during G1, S and G2/M of the cell cycle and may be involved in DNA repair.

It localises to the nucleus. Its subcellular location is the chromosome. Functionally, core component of nucleosome. Nucleosomes wrap and compact DNA into chromatin, limiting DNA accessibility to the cellular machineries which require DNA as a template. Histones thereby play a central role in transcription regulation, DNA repair, DNA replication and chromosomal stability. DNA accessibility is regulated via a complex set of post-translational modifications of histones, also called histone code, and nucleosome remodeling. The chain is Histone H3 (hht1) from Neosartorya fischeri (strain ATCC 1020 / DSM 3700 / CBS 544.65 / FGSC A1164 / JCM 1740 / NRRL 181 / WB 181) (Aspergillus fischerianus).